The primary structure comprises 231 residues: Cytochrome c oxidase assembly factor 7 (231 aa).

Position 2 is an N-acetylalanine (A2). 5 Sel1-like repeats span residues 34-66, 68-104, 108-146, 147-183, and 184-219; these read PEGC…EKYG, GDSC…EKPG, VESC…DGGY, AASC…DLGH, and VWAC…QLHK.

This sequence belongs to the hcp beta-lactamase family. As to quaternary structure, interacts with CHCHD4/MIA40 through transient intermolecular disulfide bonds.

It localises to the mitochondrion intermembrane space. In terms of biological role, required for assembly of mitochondrial respiratory chain complex I and complex IV. The sequence is that of Cytochrome c oxidase assembly factor 7 (Coa7) from Mus musculus (Mouse).